The sequence spans 334 residues: MKTIAMTIIGAGSFGTALAIALARNGHSVLLWGYNPQHIKKLQEQRCNQVYLPDIRFPENLLLEASLETAITASDNILIAVPSHVFHQVLYNIQPYLDQHSRVIWATKGLEHGTGRFLQEVAREILGEKIPLAVFSGPTFAKELAIGWPTAMTIAASDAEFGKELQQLFHCDKSFRVYKSSDMIGVQLGGAVKNVIAIGAGISDGMGFGANARIALITRGLAEISRLGSAMGAELSTFMGMTGLGDLVLTCTDNQSRNRRFGILLGKGIDIKEAEKQIGQVVEGYLNTKEVYTLAKRIGVEMPIVEQIYQILYCGKNITEAANTLLSRTLKDEI.

NADPH contacts are provided by serine 13, phenylalanine 14, and lysine 108. 3 residues coordinate sn-glycerol 3-phosphate: lysine 108, glycine 137, and threonine 139. Alanine 141 contributes to the NADPH binding site. Lysine 193, aspartate 246, serine 256, arginine 257, and asparagine 258 together coordinate sn-glycerol 3-phosphate. The active-site Proton acceptor is lysine 193. Arginine 257 provides a ligand contact to NADPH. NADPH is bound by residues valine 281 and glutamate 283.

It belongs to the NAD-dependent glycerol-3-phosphate dehydrogenase family.

Its subcellular location is the cytoplasm. It catalyses the reaction sn-glycerol 3-phosphate + NAD(+) = dihydroxyacetone phosphate + NADH + H(+). The catalysed reaction is sn-glycerol 3-phosphate + NADP(+) = dihydroxyacetone phosphate + NADPH + H(+). The protein operates within membrane lipid metabolism; glycerophospholipid metabolism. Functionally, catalyzes the reduction of the glycolytic intermediate dihydroxyacetone phosphate (DHAP) to sn-glycerol 3-phosphate (G3P), the key precursor for phospholipid synthesis. The polypeptide is Glycerol-3-phosphate dehydrogenase [NAD(P)+] (Bartonella tribocorum (strain CIP 105476 / IBS 506)).